The sequence spans 98 residues: Small ribosomal subunit protein uS19 (98 aa).

Disordered stretches follow at residues 1-30 (MARSIKKGPFADKHLTKKVEDANKGNKKSV) and 78-98 (RTFHGHSAEKKAAAAPAPAKK). Residues 9-24 (PFADKHLTKKVEDANK) are compositionally biased toward basic and acidic residues.

It belongs to the universal ribosomal protein uS19 family.

Protein S19 forms a complex with S13 that binds strongly to the 16S ribosomal RNA. The chain is Small ribosomal subunit protein uS19 from Anaeromyxobacter dehalogenans (strain 2CP-1 / ATCC BAA-258).